Here is a 586-residue protein sequence, read N- to C-terminus: NudC domain-containing protein 1 (586 aa).

The region spanning 275-364 is the CS domain; it reads KREPLYNWQQ…EPGCTWAELV (90 aa).

It localises to the cytoplasm. It is found in the nucleus. The protein is NudC domain-containing protein 1 of Xenopus laevis (African clawed frog).